The sequence spans 215 residues: Phosphatidylserine decarboxylase proenzyme (215 aa).

The Schiff-base intermediate with substrate; via pyruvic acid role is filled by Ser-185. Position 185 is a pyruvic acid (Ser); by autocatalysis (Ser-185).

This sequence belongs to the phosphatidylserine decarboxylase family. PSD-A subfamily. In terms of assembly, heterodimer of a large membrane-associated beta subunit and a small pyruvoyl-containing alpha subunit. It depends on pyruvate as a cofactor. Post-translationally, is synthesized initially as an inactive proenzyme. Formation of the active enzyme involves a self-maturation process in which the active site pyruvoyl group is generated from an internal serine residue via an autocatalytic post-translational modification. Two non-identical subunits are generated from the proenzyme in this reaction, and the pyruvate is formed at the N-terminus of the alpha chain, which is derived from the carboxyl end of the proenzyme. The post-translation cleavage follows an unusual pathway, termed non-hydrolytic serinolysis, in which the side chain hydroxyl group of the serine supplies its oxygen atom to form the C-terminus of the beta chain, while the remainder of the serine residue undergoes an oxidative deamination to produce ammonia and the pyruvoyl prosthetic group on the alpha chain.

The protein localises to the cell membrane. The catalysed reaction is a 1,2-diacyl-sn-glycero-3-phospho-L-serine + H(+) = a 1,2-diacyl-sn-glycero-3-phosphoethanolamine + CO2. It participates in phospholipid metabolism; phosphatidylethanolamine biosynthesis; phosphatidylethanolamine from CDP-diacylglycerol: step 2/2. In terms of biological role, catalyzes the formation of phosphatidylethanolamine (PtdEtn) from phosphatidylserine (PtdSer). In Streptomyces griseus subsp. griseus (strain JCM 4626 / CBS 651.72 / NBRC 13350 / KCC S-0626 / ISP 5235), this protein is Phosphatidylserine decarboxylase proenzyme.